Consider the following 474-residue polypeptide: Shugoshin-1 (474 aa).

Disordered stretches follow at residues 1 to 53 (MTST…KPNA), 189 to 226 (VESQ…NQGS), 322 to 356 (NSKQ…RCSK), and 422 to 442 (VSME…RKSN). Composition is skewed to polar residues over residues 12 to 22 (GSLNPPHSNPS) and 190 to 201 (ESQSAVSSNTVC). The segment covering 211 to 220 (KRMPQRRRSS) has biased composition (basic residues). 2 stretches are compositionally biased toward polar residues: residues 322-341 (NSKQ…NTVD) and 422-431 (VSMEQRTNQE).

It belongs to the shugoshin family. As to expression, highly expressed in tissues containing meiocytes. Expressed at much lower level in leaves and pollen-containing flowers.

The protein localises to the nucleus. Its subcellular location is the chromosome. It is found in the centromere. Plays a central role in chromosome cohesion during meiosis I by preventing premature dissociation of cohesin complex from centromeres after prophase, when most of cohesin complex dissociates from chromosomes arms. Required for maintenance of centromeric cohesion before prophase II and correct segregation of chromatids during meiosis II. Has apparently no function in mitosis. The chain is Shugoshin-1 from Zea mays (Maize).